Reading from the N-terminus, the 329-residue chain is DNA-directed RNA polymerase subunit alpha (329 aa).

Positions 1–234 (MQGSVTEFLR…EQLDAFVELR (234 aa)) are alpha N-terminal domain (alpha-NTD). The tract at residues 248 to 329 (FDPILLRPVD…WPPASLVDDL (82 aa)) is alpha C-terminal domain (alpha-CTD).

This sequence belongs to the RNA polymerase alpha chain family. Homodimer. The RNAP catalytic core consists of 2 alpha, 1 beta, 1 beta' and 1 omega subunit. When a sigma factor is associated with the core the holoenzyme is formed, which can initiate transcription.

The enzyme catalyses RNA(n) + a ribonucleoside 5'-triphosphate = RNA(n+1) + diphosphate. Its function is as follows. DNA-dependent RNA polymerase catalyzes the transcription of DNA into RNA using the four ribonucleoside triphosphates as substrates. This is DNA-directed RNA polymerase subunit alpha from Shewanella violacea (strain JCM 10179 / CIP 106290 / LMG 19151 / DSS12).